The sequence spans 216 residues: UPF0134 protein MPN_344 (216 aa).

Residues 47–62 (FTIIEDQQDRPDKPEE) show a composition bias toward basic and acidic residues. Disordered stretches follow at residues 47-104 (FTII…PKPD) and 194-216 (GKMD…LESK). A compositionally biased stretch (pro residues) spans 68-78 (IPKPPKPPKGP). The span at 83–93 (EPGQPGGPDDP) shows a compositional bias: low complexity.

Belongs to the UPF0134 family.

The sequence is that of UPF0134 protein MPN_344 from Mycoplasma pneumoniae (strain ATCC 29342 / M129 / Subtype 1) (Mycoplasmoides pneumoniae).